The primary structure comprises 186 residues: NADH-quinone oxidoreductase subunit B (186 aa).

The [4Fe-4S] cluster site is built by cysteine 44, cysteine 45, cysteine 110, and cysteine 139.

The protein belongs to the complex I 20 kDa subunit family. In terms of assembly, NDH-1 is composed of 14 different subunits. Subunits NuoB, C, D, E, F, and G constitute the peripheral sector of the complex. It depends on [4Fe-4S] cluster as a cofactor.

The protein localises to the cell inner membrane. The enzyme catalyses a quinone + NADH + 5 H(+)(in) = a quinol + NAD(+) + 4 H(+)(out). NDH-1 shuttles electrons from NADH, via FMN and iron-sulfur (Fe-S) centers, to quinones in the respiratory chain. The immediate electron acceptor for the enzyme in this species is believed to be ubiquinone. Couples the redox reaction to proton translocation (for every two electrons transferred, four hydrogen ions are translocated across the cytoplasmic membrane), and thus conserves the redox energy in a proton gradient. This Leptospira biflexa serovar Patoc (strain Patoc 1 / Ames) protein is NADH-quinone oxidoreductase subunit B.